Consider the following 69-residue polypeptide: ATP synthase F(0) complex subunit e, mitochondrial (69 aa).

N6-acetyllysine is present on lysine 34.

Belongs to the ATPase e subunit family. Component of the ATP synthase complex composed at least of ATP5F1A/subunit alpha, ATP5F1B/subunit beta, ATP5MC1/subunit c (homooctomer), MT-ATP6/subunit a, MT-ATP8/subunit 8, ATP5ME/subunit e, ATP5MF/subunit f, ATP5MG/subunit g, ATP5MK/subunit k, ATP5MJ/subunit j, ATP5F1C/subunit gamma, ATP5F1D/subunit delta, ATP5F1E/subunit epsilon, ATP5PF/subunit F6, ATP5PB/subunit b, ATP5PD/subunit d, ATP5PO/subunit OSCP. ATP synthase complex consists of a soluble F(1) head domain (subunits alpha(3) and beta(3)) - the catalytic core - and a membrane F(0) domain - the membrane proton channel (subunits c, a, 8, e, f, g, k and j). These two domains are linked by a central stalk (subunits gamma, delta, and epsilon) rotating inside the F1 region and a stationary peripheral stalk (subunits F6, b, d, and OSCP).

It localises to the mitochondrion. The protein resides in the mitochondrion inner membrane. Its function is as follows. Subunit e, of the mitochondrial membrane ATP synthase complex (F(1)F(0) ATP synthase or Complex V) that produces ATP from ADP in the presence of a proton gradient across the membrane which is generated by electron transport complexes of the respiratory chain. ATP synthase complex consist of a soluble F(1) head domain - the catalytic core - and a membrane F(1) domain - the membrane proton channel. These two domains are linked by a central stalk rotating inside the F(1) region and a stationary peripheral stalk. During catalysis, ATP synthesis in the catalytic domain of F(1) is coupled via a rotary mechanism of the central stalk subunits to proton translocation. In vivo, can only synthesize ATP although its ATP hydrolase activity can be activated artificially in vitro. Part of the complex F(0) domain. The polypeptide is ATP synthase F(0) complex subunit e, mitochondrial (Cricetulus longicaudatus (Long-tailed dwarf hamster)).